We begin with the raw amino-acid sequence, 193 residues long: dCTP deaminase (193 aa).

Residues 110 to 115 (RSSLAR), Asp128, 136 to 138 (VLE), Tyr171, Lys178, and Gln182 contribute to the dCTP site. Glu138 acts as the Proton donor/acceptor in catalysis. Positions 169–193 (RPYNRRQDAKYKDQQGAVASRIDKD) are disordered.

The protein belongs to the dCTP deaminase family. Homotrimer.

It catalyses the reaction dCTP + H2O + H(+) = dUTP + NH4(+). It functions in the pathway pyrimidine metabolism; dUMP biosynthesis; dUMP from dCTP (dUTP route): step 1/2. Its function is as follows. Catalyzes the deamination of dCTP to dUTP. The polypeptide is dCTP deaminase (Pectobacterium carotovorum subsp. carotovorum (strain PC1)).